The sequence spans 715 residues: Eosinophil peroxidase (715 aa).

Positions Met1–Ala17 are cleaved as a signal peptide. A propeptide spanning residues Gln18–Glu139 is cleaved from the precursor. N-linked (GlcNAc...) asparagine glycosylation is found at Asn52 and Asn113. Cys141 and Cys152 are oxidised to a cystine. Asp232 serves as a coordination point for heme b. Residue His233 is the Proton acceptor of the active site. Residue Asp234 coordinates Ca(2+). Intrachain disulfides connect Cys253/Cys263 and Cys257/Cys281. Residues Thr306, Phe308, Asp310, and Ser312 each contribute to the Ca(2+) site. Residues Asn327 and Asn363 are each glycosylated (N-linked (GlcNAc...) asparagine). A disulfide bridge links Cys359 with Cys370. The heme b site is built by Glu380 and His474. 3'-nitrotyrosine is present on Tyr488. Disulfide bonds link Cys578–Cys635 and Cys676–Cys701. N-linked (GlcNAc...) asparagine glycans are attached at residues Asn700 and Asn708.

The protein belongs to the peroxidase family. XPO subfamily. As to quaternary structure, tetramer of two light chains and two heavy chains. Ca(2+) is required as a cofactor. It depends on heme b as a cofactor.

The protein resides in the cytoplasmic granule. It catalyses the reaction 2 a phenolic donor + H2O2 = 2 a phenolic radical donor + 2 H2O. Its function is as follows. Mediates tyrosine nitration of secondary granule proteins in mature resting eosinophils. Shows significant inhibitory activity towards Mycobacterium tuberculosis H37Rv by inducing bacterial fragmentation and lysis. This is Eosinophil peroxidase (EPX) from Homo sapiens (Human).